Consider the following 339-residue polypeptide: STEAP1 protein (339 aa).

The next 2 membrane-spanning stretches (helical) occupy residues 71–91 (WHLP…YTLL) and 119–139 (PMVS…AAIV). The region spanning 118-265 (LPMVSITLLA…KLGIVSLLLG (148 aa)) is the Ferric oxidoreductase domain. FAD contacts are provided by glutamine 140 and arginine 161. A run of 2 helical transmembrane segments spans residues 164 to 184 (FGLL…SYPM) and 218 to 238 (IYVS…VTSI). Histidine 175 lines the heme b pocket. Positions 237 and 254 each coordinate FAD. A run of 2 helical transmembrane segments spans residues 258–278 (GIVS…NKWI) and 291–311 (FMIA…LFLP). Heme b is bound at residue histidine 268.

The protein belongs to the STEAP family. In terms of assembly, homotrimer. Requires FAD as cofactor. The cofactor is heme b. As to expression, ubiquitously expressed. Highly expressed in prostate tumors.

The protein resides in the endosome membrane. Its subcellular location is the cell membrane. Does not function as a metalloreductase due to the absence of binding sites for the electron-donating substrate NADPH. Promotes Fe(3+) reduction when fused to the NADPH-binding domain of STEAP4. This Homo sapiens (Human) protein is STEAP1 protein (STEAP1).